Consider the following 553-residue polypeptide: Membrane protein insertase YidC (553 aa).

The chain crosses the membrane as a helical span at residues 3 to 23 (IKRTILWVIFSLSVVLLFDNW). Residues 44–64 (AAAPGGTPAGDVPKAAAPAAA) are disordered. 4 consecutive transmembrane segments (helical) span residues 359–379 (LLGNWGWSIVALTVLVKLVFF), 429–449 (LGGCLPIVIQIPVFIALYWVL), 467–487 (LASPDPFYILPILMAVSMFVQ), and 507–527 (PIAFSVMFFFFPAGLVLYWVV).

It belongs to the OXA1/ALB3/YidC family. Type 1 subfamily. In terms of assembly, interacts with the Sec translocase complex via SecD. Specifically interacts with transmembrane segments of nascent integral membrane proteins during membrane integration.

The protein localises to the cell inner membrane. In terms of biological role, required for the insertion and/or proper folding and/or complex formation of integral membrane proteins into the membrane. Involved in integration of membrane proteins that insert both dependently and independently of the Sec translocase complex, as well as at least some lipoproteins. Aids folding of multispanning membrane proteins. The chain is Membrane protein insertase YidC from Ralstonia nicotianae (strain ATCC BAA-1114 / GMI1000) (Ralstonia solanacearum).